Reading from the N-terminus, the 98-residue chain is NADH-ubiquinone oxidoreductase chain 4L (98 aa).

3 helical membrane passes run 1–21 (MSPL…GLAF), 26–46 (LISA…PLSI), and 56–76 (FALV…TGLA).

It belongs to the complex I subunit 4L family. Core subunit of respiratory chain NADH dehydrogenase (Complex I) which is composed of 45 different subunits.

Its subcellular location is the mitochondrion inner membrane. It carries out the reaction a ubiquinone + NADH + 5 H(+)(in) = a ubiquinol + NAD(+) + 4 H(+)(out). Core subunit of the mitochondrial membrane respiratory chain NADH dehydrogenase (Complex I) which catalyzes electron transfer from NADH through the respiratory chain, using ubiquinone as an electron acceptor. Part of the enzyme membrane arm which is embedded in the lipid bilayer and involved in proton translocation. This chain is NADH-ubiquinone oxidoreductase chain 4L (MT-ND4L), found in Gallus gallus (Chicken).